A 426-amino-acid polypeptide reads, in one-letter code: Phytoene synthase 3, chloroplastic (426 aa).

Residues 1 to 52 (MMSTSRAVKSPACAARRRQWSADAPNRTATFLACRHGRRLGGGGGAPCSVRA) constitute a chloroplast transit peptide.

The protein belongs to the phytoene/squalene synthase family. Expressed in roots and endosperm.

Its subcellular location is the plastid. It localises to the chloroplast. It is found in the plastoglobule. It catalyses the reaction 2 (2E,6E,10E)-geranylgeranyl diphosphate = 15-cis-phytoene + 2 diphosphate. Catalyzes the conversion of geranylgeranyl diphosphate to phytoene. Mediates the first committed step in carotenoid biosynthesis. May play a role in regulating carotenoid flux in response to abiotic stress in roots. May control flux to carotenoid precursors that are required for abiotic stress-induced abscisic acid (ABA) formation in roots. This Zea mays (Maize) protein is Phytoene synthase 3, chloroplastic.